The following is a 504-amino-acid chain: Tyrosine-protein kinase HCK (504 aa).

Glycine 2 carries the N-myristoyl glycine lipid modification. Residue cysteine 3 is the site of S-palmitoyl cysteine attachment. A Phosphothreonine modification is found at threonine 15. Tyrosine 30 is modified (phosphotyrosine). Residues 34 to 49 (PTSTIKPGPNSNNRNT) show a composition bias toward polar residues. Positions 34 to 53 (PTSTIKPGPNSNNRNTPGIG) are disordered. The SH3 domain occupies 56 to 116 (SEDIIVVALY…PSNYVARVDS (61 aa)). The SH2 domain maps to 122–219 (WFFKGISRKD…GLCQKLSVPC (98 aa)). Threonine 180 bears the Phosphothreonine mark. Tyrosine 187 carries the post-translational modification Phosphotyrosine. The 254-residue stretch at 240-493 (LKLEKKLGAG…YIQSVLDDFY (254 aa)) folds into the Protein kinase domain. ATP contacts are provided by residues 246–254 (LGAGQFGEV) and lysine 268. Catalysis depends on aspartate 359, which acts as the Proton acceptor. Phosphotyrosine; by autocatalysis is present on tyrosine 389. Serine 440 is modified (phosphoserine). Residue tyrosine 500 is modified to Phosphotyrosine.

Belongs to the protein kinase superfamily. Tyr protein kinase family. SRC subfamily. In terms of assembly, interacts with ADAM15. Interacts with FASLG. Interacts with ARRB1 and ARRB2. Interacts with FCGR1A; the interaction may be indirect. Interacts with IL6ST. Interacts (via SH3 domain) with ELMO1. Interacts (via SH3 domain) with TP73. Interacts with YAP1. Interacts with ABL1 and ITGB1, and thereby recruits ABL1 to activated ITGB1. Interacts (via SH2 domain) with FLT3 (tyrosine phosphorylated). Interacts with CBL. Interacts with VAV1, WAS and RAPGEF1. Interacts (via SH3 domain) with WDCP. In terms of processing, phosphorylated on several tyrosine residues. Autophosphorylated. Becomes rapidly phosphorylated upon activation of the immunoglobulin receptors FCGR1A and FCGR2A. Phosphorylation at Tyr-389 increases kinase activity. Phosphorylation at Tyr-500 inhibits kinase activity. Kinase activity is not required for phosphorylation at Tyr-500, suggesting that this site may be a target of other kinases. Ubiquitinated by CBL, leading to its degradation via the proteasome. Post-translationally, palmitoylation requires prior myristoylation. Palmitoylation is required for caveolar localization.

The protein resides in the cytoplasmic vesicle. Its subcellular location is the secretory vesicle. It localises to the cytoplasm. It is found in the cytosol. The protein localises to the cell membrane. The protein resides in the membrane. Its subcellular location is the caveola. It localises to the cell junction. It is found in the focal adhesion. The protein localises to the cytoskeleton. The protein resides in the golgi apparatus. Its subcellular location is the lysosome. It localises to the nucleus. The enzyme catalyses L-tyrosyl-[protein] + ATP = O-phospho-L-tyrosyl-[protein] + ADP + H(+). With respect to regulation, subject to autoinhibition, mediated by intramolecular interactions involving the SH2 and SH3 domains. Kinase activity is also regulated by phosphorylation at regulatory tyrosine residues. Phosphorylation at Tyr-389 is required for optimal activity. Phosphorylation at Tyr-500 inhibits kinase activity. Its function is as follows. Non-receptor tyrosine-protein kinase found in hematopoietic cells that transmits signals from cell surface receptors and plays an important role in the regulation of innate immune responses, including neutrophil, monocyte, macrophage and mast cell functions, phagocytosis, cell survival and proliferation, cell adhesion and migration. Acts downstream of receptors that bind the Fc region of immunoglobulins, such as FCGR1A and FCGR2A, but also CSF3R, PLAUR, the receptors for IFNG, IL2, IL6 and IL8, and integrins, such as ITGB1 and ITGB2. During the phagocytic process, mediates mobilization of secretory lysosomes, degranulation, and activation of NADPH oxidase to bring about the respiratory burst. Plays a role in the release of inflammatory molecules. Promotes reorganization of the actin cytoskeleton and actin polymerization, formation of podosomes and cell protrusions. Inhibits TP73-mediated transcription activation and TP73-mediated apoptosis. Phosphorylates CBL in response to activation of immunoglobulin gamma Fc region receptors. Phosphorylates ADAM15, BCR, ELMO1, FCGR2A, GAB1, GAB2, RAPGEF1, STAT5B, TP73, VAV1 and WAS. The protein is Tyrosine-protein kinase HCK (HCK) of Macaca fascicularis (Crab-eating macaque).